We begin with the raw amino-acid sequence, 205 residues long: Thymidine kinase (205 aa).

ATP is bound by residues 9-16 (SAMNAGKT) and 88-91 (DECH). Catalysis depends on Glu89, which acts as the Proton acceptor. Zn(2+) contacts are provided by Cys146, Cys148, Cys183, and His186.

Belongs to the thymidine kinase family. As to quaternary structure, homotetramer.

Its subcellular location is the cytoplasm. It carries out the reaction thymidine + ATP = dTMP + ADP + H(+). The polypeptide is Thymidine kinase (Blochmanniella pennsylvanica (strain BPEN)).